A 253-amino-acid polypeptide reads, in one-letter code: Tryptophan synthase alpha chain (253 aa).

Active-site proton acceptor residues include E45 and D56.

It belongs to the TrpA family. As to quaternary structure, tetramer of two alpha and two beta chains.

It catalyses the reaction (1S,2R)-1-C-(indol-3-yl)glycerol 3-phosphate + L-serine = D-glyceraldehyde 3-phosphate + L-tryptophan + H2O. It functions in the pathway amino-acid biosynthesis; L-tryptophan biosynthesis; L-tryptophan from chorismate: step 5/5. In terms of biological role, the alpha subunit is responsible for the aldol cleavage of indoleglycerol phosphate to indole and glyceraldehyde 3-phosphate. This chain is Tryptophan synthase alpha chain, found in Flavobacterium psychrophilum (strain ATCC 49511 / DSM 21280 / CIP 103535 / JIP02/86).